Consider the following 606-residue polypeptide: Kelch-like protein 41 (606 aa).

Serine 3 bears the Phosphoserine mark. One can recognise a BTB domain in the interval 33–100; that stretch reads IDCTLKAGDK…LYSASIDLND (68 aa). Positions 135-237 constitute a BACK domain; that stretch reads CLAILRLGLL…AEKYFKDHVE (103 aa). Kelch repeat units follow at residues 346-398, 399-447, 448-495, 497-542, and 544-599; these read QVYV…EVDD, KIYV…SHNG, MIYC…IHKG, IVIA…SLAG, and LYAI…TRLN.

In terms of assembly, interacts with NRAP. Part of a complex that contains CUL3, RBX1 and KLHL41. Interacts with LASP1. In terms of processing, ubiquitinated by E3 ubiquitin ligase complex formed by CUL3 and RBX1 and probably targeted for proteasome-independent degradation. Quinone-induced oxidative stress increases its ubiquitination. In terms of tissue distribution, skeletal muscle. Localized between laterally fusing myofibrils in skeletal muscle (at protein level). Expressed at a lower level in the heart compared to skeletal muscle.

It localises to the cytoplasm. The protein resides in the cytoskeleton. The protein localises to the cell projection. Its subcellular location is the pseudopodium. It is found in the ruffle. It localises to the myofibril. The protein resides in the sarcomere. The protein localises to the m line. Its subcellular location is the sarcoplasmic reticulum membrane. It is found in the endoplasmic reticulum membrane. Its function is as follows. Involved in skeletal muscle development and differentiation. Regulates proliferation and differentiation of myoblasts and plays a role in myofibril assembly by promoting lateral fusion of adjacent thin fibrils into mature, wide myofibrils. Required for pseudopod elongation in transformed cells. This chain is Kelch-like protein 41 (Klhl41), found in Mus musculus (Mouse).